We begin with the raw amino-acid sequence, 672 residues long: Fumonisin cluster-specific transcription factor FUM21 (672 aa).

A DNA-binding region (zn(2)-C6 fungal-type) is located at residues 30–56 (CESCKRRKVRCNGTNPCNQCQKSSIEC). Disordered stretches follow at residues 65–111 (ANDG…RFDG) and 190–212 (KSSG…GFNT). Positions 77 to 93 (SPVQHTRGSLTPPQTSP) are enriched in polar residues.

It is found in the nucleus. Its function is as follows. Transcription factor that regulates the expression of the gene cluster that mediates the biosynthesis of fumonisins B1 (FB1), B2 (FB2), B3 (FB3), and B4 (FB4), which are carcinogenic mycotoxins. The protein is Fumonisin cluster-specific transcription factor FUM21 (FUM21) of Gibberella moniliformis (strain M3125 / FGSC 7600) (Maize ear and stalk rot fungus).